A 502-amino-acid chain; its full sequence is Arabinose import ATP-binding protein AraG (502 aa).

2 ABC transporter domains span residues 6-241 (LEFD…MVGR) and 252-497 (REVG…MVES). 38–45 (GENGAGKS) serves as a coordination point for ATP.

Belongs to the ABC transporter superfamily. Arabinose importer (TC 3.A.1.2.2) family. The complex is composed of two ATP-binding proteins (AraG), two transmembrane proteins (AraH) and a solute-binding protein (AraF).

It localises to the cell inner membrane. It catalyses the reaction L-arabinose(out) + ATP + H2O = L-arabinose(in) + ADP + phosphate + H(+). Part of the ABC transporter complex AraFGH involved in arabinose import. Responsible for energy coupling to the transport system. This chain is Arabinose import ATP-binding protein AraG, found in Mannheimia succiniciproducens (strain KCTC 0769BP / MBEL55E).